The chain runs to 185 residues: Segregation and condensation protein B (185 aa).

The protein belongs to the ScpB family. As to quaternary structure, homodimer. Homodimerization may be required to stabilize the binding of ScpA to the Smc head domains. Component of a cohesin-like complex composed of ScpA, ScpB and the Smc homodimer, in which ScpA and ScpB bind to the head domain of Smc. The presence of the three proteins is required for the association of the complex with DNA.

It localises to the cytoplasm. In terms of biological role, participates in chromosomal partition during cell division. May act via the formation of a condensin-like complex containing Smc and ScpA that pull DNA away from mid-cell into both cell halves. This is Segregation and condensation protein B from Carboxydothermus hydrogenoformans (strain ATCC BAA-161 / DSM 6008 / Z-2901).